A 721-amino-acid chain; its full sequence is Polyribonucleotide nucleotidyltransferase (721 aa).

D495 and D501 together coordinate Mg(2+). The region spanning 562–621 is the KH domain; that stretch reads PRLLSFRIDPELIGTVIGPGGRTIKGITERTNTKIDIEDGGIVTIASHDGAAAEEAQKII. In terms of domain architecture, S1 motif spans 631–699; the sequence is GEVFSGSITR…NRGRINLTLR (69 aa).

It belongs to the polyribonucleotide nucleotidyltransferase family. Mg(2+) is required as a cofactor.

It localises to the cytoplasm. The enzyme catalyses RNA(n+1) + phosphate = RNA(n) + a ribonucleoside 5'-diphosphate. Functionally, involved in mRNA degradation. Catalyzes the phosphorolysis of single-stranded polyribonucleotides processively in the 3'- to 5'-direction. This is Polyribonucleotide nucleotidyltransferase from Synechococcus sp. (strain CC9605).